The chain runs to 1002 residues: MASSKGGNTTAHINTLHHRLYHALNLGFRVCDEKEKKWKCTDIEIQRHVVKSISAFLDCFSRATANNRLIKDSISDIAGALVFILGSKNRAVVGLAANVVIRLIRIVPPSILHSYSLDLVESLSPLLCCQQFDVSLPCAVALNAILVNVRETKEKEVWKILEDEKTVVSVVGNLQIFSEGSMSVEWFQEMALLLSTIMLKWPQSRYSVWNNPALMGVLESVSQKPDMGLTVATLKLYSSLALCGHGANELLDNGKPMLDMMISCMEESSSQNARIEGLKLAQRLATGNRECLKMINMCSESLVKATVRTMGKWFLSSGKLELDQMSLLVEACKLALITRWEGQHHIYFWKYRISEALLSLVVENFHSQSLDGYVSLEEEVLVAEKVLNANFLPSLRSYVWDIIGFLAAHCEEEFDSILRGDELCLNFLVTCACLSFSRSVQKGYQICQNDIISASHSESASRAVLMMICSPSKYISSRARVTLSFILEEGGEQNLNSLVNFLSYIPSSGGYILPNILQTTVCLVGFACYSSIPQYASFILRKQGLEILLSFCSWYQRNWENIGASSFAPSSQSITEKRICCWVCTEDWDNKDAFLLYALLALAELVNHSFFGQNHAEELSMKSGNLKDRLCTTLKEIRDGTYGSGPRWYAAHILSYFGYYGFEHKLGKRLMCAYEDEEYSDMRLLFASGNSASVNKVIIAVRCPMLLPPKEGAHSSSTISTEKSQRTVQEIRMSANVDILALVKLLEFAYSGYVEVESTTLKKLKPLAKHCKAKVLLQMLCRRRPKWGSSIPEIDIPLALTPKLIHFSDVILVPKETNVACFNCRMCSLTSPHAHSHRVILSSGCEYLRALFRSGMQESHLDRLNVPVSWLGLTKLVSWFYSDELPKPPSGCKWNNMDTEAKLDELQAYVEIYSLSEWWIMEELQNDCAHVILSCLESARELSIKTIELAASFSMWKLVEAAANHAAPIYHQLRDSGELDELDDELVNLIRTAAVQFSQQGG.

BTB domains lie at 680 to 758 (SDMR…EVES) and 808 to 889 (SDVI…PKPP).

The protein operates within protein modification; protein ubiquitination. May act as a substrate-specific adapter of an E3 ubiquitin-protein ligase complex (CUL3-RBX1-BTB) which mediates the ubiquitination and subsequent proteasomal degradation of target proteins. In Arabidopsis thaliana (Mouse-ear cress), this protein is BTB/POZ domain-containing protein At1g04390.